The following is an 85-amino-acid chain: uncharacterized protein (85 aa).

2 consecutive transmembrane segments (helical) span residues 12-34 (ICLSVVTFSTSYSLDAGVVVLAF) and 49-71 (IPEFLWVTWQSFIKVLSLLNGFV).

It localises to the cell membrane. This is an uncharacterized protein from Archaeoglobus fulgidus (strain ATCC 49558 / DSM 4304 / JCM 9628 / NBRC 100126 / VC-16).